We begin with the raw amino-acid sequence, 554 residues long: Valerianol synthase TPS1E (554 aa).

The Mg(2+) site is built by Asp-307 and Asp-311. The DDXXD motif motif lies at 326 to 330 (VQRWD). Mg(2+) is bound by residues Asp-452, Ser-456, and Glu-460.

It belongs to the terpene synthase family. Mg(2+) serves as cofactor.

The catalysed reaction is (2E,6E)-farnesyl diphosphate + H2O = valerianol + diphosphate. It participates in secondary metabolite biosynthesis; terpenoid biosynthesis. Terpene synthase that catalyzes the biosynthesis of the terpene valerianol, which is a volatile compound of floral scent. The protein is Valerianol synthase TPS1E of Camellia hiemalis (Camellia).